The chain runs to 721 residues: Catalase-peroxidase 1 (721 aa).

Residues 98 to 223 constitute a cross-link (tryptophyl-tyrosyl-methioninium (Trp-Tyr) (with M-249)); it reads WHAAGSYRVA…LAAVQMGLIY (126 aa). His-99 acts as the Proton acceptor in catalysis. A cross-link (tryptophyl-tyrosyl-methioninium (Tyr-Met) (with W-98)) is located at residues 223–249; it reads YVNPEGVNGQPDPLRTAQDVRVTFGRM. His-264 lines the heme b pocket.

This sequence belongs to the peroxidase family. Peroxidase/catalase subfamily. Homodimer or homotetramer. It depends on heme b as a cofactor. Post-translationally, formation of the three residue Trp-Tyr-Met cross-link is important for the catalase, but not the peroxidase activity of the enzyme.

It carries out the reaction H2O2 + AH2 = A + 2 H2O. The enzyme catalyses 2 H2O2 = O2 + 2 H2O. In terms of biological role, bifunctional enzyme with both catalase and broad-spectrum peroxidase activity. The polypeptide is Catalase-peroxidase 1 (Legionella pneumophila (strain Corby)).